The primary structure comprises 203 residues: Ribosome biogenesis protein RLP24 (203 aa).

The segment at 147–203 is disordered; the sequence is RKAAKENAMDEEIEDEEEEIASEDMMSEDEEMESESEAESTKQKVVLKNKKKSKRSN. Positions 155 to 184 are enriched in acidic residues; sequence MDEEIEDEEEEIASEDMMSEDEEMESESEA. Basic residues predominate over residues 191–203; the sequence is VVLKNKKKSKRSN.

It belongs to the eukaryotic ribosomal protein eL24 family. As to quaternary structure, associated with nucleolar and cytoplasmic pre-60S particles. At the end of biogenesis it dissociates from cytoplasmic pre-60S particles and is likely to be exchanged for its ribosomal homolog, RPL24.

The protein resides in the cytoplasm. It localises to the nucleus. Its function is as follows. Involved in the biogenesis of the 60S ribosomal subunit. Ensures the docking of DEHA2D15950g/NOG1 to pre-60S particles. Activates and recruits ATPase AFG2 to cytoplasmic pre-60S ribosomal particles. This chain is Ribosome biogenesis protein RLP24 (RLP24), found in Debaryomyces hansenii (strain ATCC 36239 / CBS 767 / BCRC 21394 / JCM 1990 / NBRC 0083 / IGC 2968) (Yeast).